Here is a 700-residue protein sequence, read N- to C-terminus: Methionine--tRNA ligase (700 aa).

Residues 13–23 (PYANGDIHLGH) carry the 'HIGH' region motif. Residues Cys144, Cys147, Cys157, and Cys160 each coordinate Zn(2+). The short motif at 341-345 (KMSKS) is the 'KMSKS' region element. Lys344 contacts ATP. The region spanning 598 to 700 (DFAKVEMKVA…DNCVIGDLLA (103 aa)) is the tRNA-binding domain.

Belongs to the class-I aminoacyl-tRNA synthetase family. MetG type 1 subfamily. As to quaternary structure, homodimer. Requires Zn(2+) as cofactor.

It localises to the cytoplasm. It carries out the reaction tRNA(Met) + L-methionine + ATP = L-methionyl-tRNA(Met) + AMP + diphosphate. Functionally, is required not only for elongation of protein synthesis but also for the initiation of all mRNA translation through initiator tRNA(fMet) aminoacylation. The sequence is that of Methionine--tRNA ligase from Psychrobacter arcticus (strain DSM 17307 / VKM B-2377 / 273-4).